We begin with the raw amino-acid sequence, 220 residues long: Zip homologous protein 1 (220 aa).

An RING-type zinc finger spans residues 6–44; the sequence is CNGCGCSPSKRQFFITACSHVFCETCRTTPTADFCHLCK. A coiled-coil region spans residues 124-155; the sequence is LTSFEENNRKKLEDIERENEKLRNLISALELK. Disordered stretches follow at residues 166–186 and 201–220; these read EFFM…SDVD and RSDS…GSLF. A compositionally biased stretch (polar residues) spans 171–180; it reads GTPTSSNPSV.

Interacts with zhp-2; the interaction is required for their chromosome association and stability. In terms of tissue distribution, expressed in the germline.

It localises to the chromosome. In terms of biological role, recruited co-dependently with zhp-2 to the synaptonemal complex between homologous chromosome pairs to regulate the formation and number of crossover events between homologs during meiotic recombination. Together with zhp-2, promotes the accumulation of pro-crossover proteins, including zhp-3 and zhp-4, at a designated crossover site along the recombination intermediate. Limits the number of crossover sites along a recombination intermediate by restricting the association of these pro-crossover proteins with other recombination sites during late prophase. Also, together with zhp-2, plays a role in chromosome remodeling following crossover formation to promote two successive rounds of chromosome segregation during meiosis. The polypeptide is Zip homologous protein 1 (Caenorhabditis elegans).